We begin with the raw amino-acid sequence, 185 residues long: Ribosomal RNA small subunit methyltransferase G (185 aa).

S-adenosyl-L-methionine contacts are provided by residues Gly59, Phe64, 110 to 111 (IQ), and Arg127.

This sequence belongs to the methyltransferase superfamily. RNA methyltransferase RsmG family.

The protein localises to the cytoplasm. It carries out the reaction guanosine(527) in 16S rRNA + S-adenosyl-L-methionine = N(7)-methylguanosine(527) in 16S rRNA + S-adenosyl-L-homocysteine. Its function is as follows. Specifically methylates the N7 position of guanine in position 527 of 16S rRNA. The polypeptide is Ribosomal RNA small subunit methyltransferase G (Helicobacter hepaticus (strain ATCC 51449 / 3B1)).